A 1082-amino-acid chain; its full sequence is Protein SPT23 (1082 aa).

3 disordered regions span residues 315–346 (NASN…PQSD), 376–417 (NNNN…FSDI), and 457–476 (ASAR…FMST). Residues 316-328 (ASNTTTPTSTSNA) are compositionally biased toward low complexity. Polar residues predominate over residues 329–346 (QVSPMTNDTRSFSSPQSD). 2 stretches are compositionally biased toward low complexity: residues 376–391 (NNNN…KTNT) and 399–416 (HFPS…SFSD). Phosphoserine is present on serine 468. Residues 508 to 585 (PSIQRVIPAQ…DPSETSMRNN (78 aa)) form the IPT/TIG domain. 2 ANK repeats span residues 709-738 (RGRT…HLND) and 742-771 (FGFT…NIMK).

Dosage-dependent suppressor of Ty-induced promoter mutations. May exert its suppression effect through protein-protein interactions since does not present any of the motifs generally found in transcriptional activators or DNA binding proteins. This is Protein SPT23 (SPT23) from Saccharomyces cerevisiae (strain ATCC 204508 / S288c) (Baker's yeast).